Reading from the N-terminus, the 158-residue chain is Phosphopantetheine adenylyltransferase (158 aa).

Residue serine 9 coordinates substrate. Residues 9–10 (SF) and histidine 17 each bind ATP. 3 residues coordinate substrate: lysine 41, threonine 73, and arginine 87. Residues 88–90 (GLR), glutamate 98, and 122–128 (NQNISSS) each bind ATP.

The protein belongs to the bacterial CoaD family. As to quaternary structure, homohexamer. Requires Mg(2+) as cofactor.

Its subcellular location is the cytoplasm. The catalysed reaction is (R)-4'-phosphopantetheine + ATP + H(+) = 3'-dephospho-CoA + diphosphate. It functions in the pathway cofactor biosynthesis; coenzyme A biosynthesis; CoA from (R)-pantothenate: step 4/5. Reversibly transfers an adenylyl group from ATP to 4'-phosphopantetheine, yielding dephospho-CoA (dPCoA) and pyrophosphate. The sequence is that of Phosphopantetheine adenylyltransferase from Leuconostoc citreum (strain KM20).